Reading from the N-terminus, the 425-residue chain is Serine--tRNA ligase (425 aa).

Residue T233–E235 participates in L-serine binding. R264 to E266 provides a ligand contact to ATP. E287 contributes to the L-serine binding site. ATP is bound at residue E351–S354. S387 is an L-serine binding site.

It belongs to the class-II aminoacyl-tRNA synthetase family. Type-1 seryl-tRNA synthetase subfamily. As to quaternary structure, homodimer. The tRNA molecule binds across the dimer.

It localises to the cytoplasm. The catalysed reaction is tRNA(Ser) + L-serine + ATP = L-seryl-tRNA(Ser) + AMP + diphosphate + H(+). The enzyme catalyses tRNA(Sec) + L-serine + ATP = L-seryl-tRNA(Sec) + AMP + diphosphate + H(+). It participates in aminoacyl-tRNA biosynthesis; selenocysteinyl-tRNA(Sec) biosynthesis; L-seryl-tRNA(Sec) from L-serine and tRNA(Sec): step 1/1. In terms of biological role, catalyzes the attachment of serine to tRNA(Ser). Is also able to aminoacylate tRNA(Sec) with serine, to form the misacylated tRNA L-seryl-tRNA(Sec), which will be further converted into selenocysteinyl-tRNA(Sec). The polypeptide is Serine--tRNA ligase (Clostridium botulinum (strain Eklund 17B / Type B)).